The sequence spans 2364 residues: Cytotoxin-L (2364 aa).

Residues 1–91 (MSLVNKAQLQ…EVLELKNNSL (91 aa)) form a four-helical bundle region. The region spanning 96–468 (KNLHFIWIGG…APDVRSTINL (373 aa)) is the GT44 domain. The segment at 96–468 (KNLHFIWIGG…APDVRSTINL (373 aa)) is glucosyltransferase region. UDP-alpha-D-glucose contacts are provided by residues 101 to 103 (IWI), Asn-139, 265 to 270 (LAAASD), and 286 to 288 (DVD). Positions 288, 515, and 518 each coordinate Mg(2+). 518 to 520 (SLW) lines the UDP-alpha-D-glucose pocket. Residues 544-799 (GEDDILDFSQ…KSKNLHELST (256 aa)) form an autoprocessing region region. Zn(2+) is bound by residues Glu-545 and Asp-546. The 208-residue stretch at 567–774 (SSSMRTPNKE…EESIIKDISS (208 aa)) folds into the Peptidase C80 domain. 1D-myo-inositol hexakisphosphate-binding residues include Tyr-577, Lys-600, and Lys-647. His-653 contributes to the Zn(2+) binding site. Residue His-653 is the For protease activity of the active site. Residue Cys-698 is the Nucleophile; for protease activity of the active site. Residue His-757 participates in Zn(2+) binding. 3 residues coordinate 1D-myo-inositol hexakisphosphate: Lys-764, Lys-775, and Lys-792. Residues 800-1500 (LLQEIKNNSN…ESIIRNIYMP (701 aa)) form a translocation region region. 5 interaction with host SEMA6A and SEMA6B regions span residues 1433–1438 (CIKLIE), 1466–1471 (DNETKY), 1484–1495 (FTAEFSNESIIR), 1504–1511 (NLFIYSSK), and 1596–1601 (YNNLDP). 19 Cell wall-binding repeats span residues 1833–1852 (VSGL…PKNN), 1854–1873 (ITGF…TKSG), 1876–1895 (SIGE…QGIL), 1926–1945 (FIGK…NYRA), 1946–1965 (AVEW…KTGE), 1967–1986 (LKGL…NGIM), 1987–2006 (QTGF…DGVM), 2007–2026 (QVGY…NGER), 2057–2076 (YNGI…SNTA), 2077–2097 (VVGW…NTAE), 2099–2118 (CIGL…NGIR), 2119–2138 (QLGF…SGKI), 2139–2158 (ELGY…SGLV), 2209–2224 (ETGW…YFDP), 2227–2249 (KKAY…NGIM), 2250–2269 (KTGL…DGKM), 2270–2289 (QFGY…DGKM), 2320–2339 (YTGW…EYIA), and 2340–2359 (ATSS…DTAE). The tract at residues 1835–2364 (GLIYINDSLY…PDTAELVVSE (530 aa)) is receptor-binding (CROPS) region.

This sequence belongs to the clostridial glucosylating toxin (LCGT) family. Homomultimer; forms an inactive homomultimer at pH 8, which dissociates at pH 4, leading to cytotoxicity. Interacts with host SEMA6A; interaction promotes toxin entry into host cell. Interacts with host SEMA6B; interaction promotes toxin entry into host cell. Requires Zn(2+) as cofactor. The cofactor is Mn(2+). Mg(2+) is required as a cofactor. Undergoes autocatalytic cleavage to release the N-terminal part (Glucosyltransferase TcsL), which constitutes the active part of the toxin, in the host cytosol. 1D-myo-inositol hexakisphosphate-binding (InsP6) activates the peptidase C80 domain and promotes autoprocessing.

Its subcellular location is the secreted. It is found in the host endosome membrane. The protein localises to the host cytoplasm. The protein resides in the host cytosol. It localises to the host cell membrane. The catalysed reaction is L-threonyl-[protein] + UDP-alpha-D-glucose = 3-O-(alpha-D-glucosyl)-L-threonyl-[protein] + UDP + H(+). Its activity is regulated as follows. Protease activity is activated upon binding to 1D-myo-inositol hexakisphosphate (InsP6), which induces conformational reorganization. In terms of biological role, precursor of a cytotoxin that targets the vascular endothelium, inducing an anti-inflammatory effect and resulting in lethal toxic shock syndrome. TcsL constitutes the main toxin that mediates the pathology of P.sordellii infection, an anaerobic Gram-positive bacterium found in soil and in the gastrointestinal and vaginal tracts of animals and humans; although the majority of carriers are asymptomatic, pathogenic P.sordellii infections arise rapidly and are highly lethal. This form constitutes the precursor of the toxin: it enters into host cells and mediates autoprocessing to release the active toxin (Glucosyltransferase TcsL) into the host cytosol. Targets vascular endothelium by binding to the semaphorin proteins SEMA6A and SEMA6B, and enters host cells via clathrin-mediated endocytosis. Once entered into host cells, acidification in the endosome promotes the membrane insertion of the translocation region and formation of a pore, leading to translocation of the GT44 and peptidase C80 domains across the endosomal membrane. This activates the peptidase C80 domain and autocatalytic processing, releasing the N-terminal part (Glucosyltransferase TcsL), which constitutes the active part of the toxin, in the cytosol. Its function is as follows. Active form of the toxin, which is released into the host cytosol following autoprocessing and inactivates small GTPases. Acts by mediating monoglucosylation of small GTPases of the Ras (H-Ras/HRAS, K-Ras/KRAS and N-Ras/NRAS) family in host cells at the conserved threonine residue located in the switch I region ('Thr-37/35'), using UDP-alpha-D-glucose as the sugar donor. Does not catalyze monoglucosylation of Ral/RALA. Also able to catalyze monoglucosylation of some members of the Rho family (Rac1 and Rap2A), but with less efficiency than with Ras proteins. Monoglucosylation of host small GTPases completely prevents the recognition of the downstream effector, blocking the GTPases in their inactive form and leading to apoptosis. Induces an anti-inflammatory effect, mainly by inactivating Ras proteins which results in blockage of the cell cycle and killing of immune cells. The absence or moderate local inflammatory response allows C.sordellii spreading in deep tissues, production of toxin which is released in the general circulation and causes a toxic shock syndrome. The polypeptide is Cytotoxin-L (Paraclostridium sordellii (Clostridium sordellii)).